Reading from the N-terminus, the 388-residue chain is Succinate--CoA ligase [ADP-forming] subunit beta (388 aa).

Positions 9–244 (KEILRKFGVA…LDEEDPAEIE (236 aa)) constitute an ATP-grasp domain. ATP contacts are provided by residues Lys46, 53–55 (GRG), Glu99, Ala102, and Glu107. Positions 199 and 213 each coordinate Mg(2+). Substrate-binding positions include Asn264 and 321 to 323 (GIM).

The protein belongs to the succinate/malate CoA ligase beta subunit family. Heterotetramer of two alpha and two beta subunits. Mg(2+) serves as cofactor.

The enzyme catalyses succinate + ATP + CoA = succinyl-CoA + ADP + phosphate. It catalyses the reaction GTP + succinate + CoA = succinyl-CoA + GDP + phosphate. The protein operates within carbohydrate metabolism; tricarboxylic acid cycle; succinate from succinyl-CoA (ligase route): step 1/1. Functionally, succinyl-CoA synthetase functions in the citric acid cycle (TCA), coupling the hydrolysis of succinyl-CoA to the synthesis of either ATP or GTP and thus represents the only step of substrate-level phosphorylation in the TCA. The beta subunit provides nucleotide specificity of the enzyme and binds the substrate succinate, while the binding sites for coenzyme A and phosphate are found in the alpha subunit. The polypeptide is Succinate--CoA ligase [ADP-forming] subunit beta (Burkholderia mallei (strain NCTC 10247)).